Consider the following 152-residue polypeptide: MFGISFSELLLVGLVALLVLGPERLPGAARTAGLWVGRLKRSFNAIKQEVEREIGADEIRRQLHNEHILSLEQEARKILAPTQQQPTPVEPVAEQTIHAPGAATVAEAPPASEVPAPLPSTPAPAPTAEPAAPVATPATTAPHDSTLPPRAP.

Residues 1-21 (MFGISFSELLLVGLVALLVLG) traverse the membrane as a helical segment. Residues 98–115 (HAPGAATVAEAPPASEVP) show a composition bias toward low complexity. The interval 98–152 (HAPGAATVAEAPPASEVPAPLPSTPAPAPTAEPAAPVATPATTAPHDSTLPPRAP) is disordered. Positions 116–127 (APLPSTPAPAPT) are enriched in pro residues. Positions 128–142 (AEPAAPVATPATTAP) are enriched in low complexity.

Belongs to the TatB family. The Tat system comprises two distinct complexes: a TatABC complex, containing multiple copies of TatA, TatB and TatC subunits, and a separate TatA complex, containing only TatA subunits. Substrates initially bind to the TatABC complex, which probably triggers association of the separate TatA complex to form the active translocon.

The protein localises to the cell inner membrane. In terms of biological role, part of the twin-arginine translocation (Tat) system that transports large folded proteins containing a characteristic twin-arginine motif in their signal peptide across membranes. Together with TatC, TatB is part of a receptor directly interacting with Tat signal peptides. TatB may form an oligomeric binding site that transiently accommodates folded Tat precursor proteins before their translocation. In Pseudomonas fluorescens (strain ATCC BAA-477 / NRRL B-23932 / Pf-5), this protein is Sec-independent protein translocase protein TatB.